The primary structure comprises 127 residues: MPKTFHRTDRVSAQLRRELGTLVHNAVREHGLPSVSVSDVEITRDMAHAKVFVTALMPERSAEAVAGLKELGYRLRMDLARAMKLRHVPELHFHYDDSVDRGEHIDNILRDLPDTLAAEKRRESDEE.

This sequence belongs to the RbfA family. Monomer. Binds 30S ribosomal subunits, but not 50S ribosomal subunits or 70S ribosomes.

It is found in the cytoplasm. Functionally, one of several proteins that assist in the late maturation steps of the functional core of the 30S ribosomal subunit. Associates with free 30S ribosomal subunits (but not with 30S subunits that are part of 70S ribosomes or polysomes). Required for efficient processing of 16S rRNA. May interact with the 5'-terminal helix region of 16S rRNA. The sequence is that of Ribosome-binding factor A from Stenotrophomonas maltophilia (strain K279a).